A 4334-amino-acid polypeptide reads, in one-letter code: Cytoplasmic dynein 2 heavy chain 1 (4334 aa).

The tract at residues 1–1704 is stem; sequence MSSDSRKTFV…KVAMAEATFD (1704 aa). ATP is bound at residue 150–157; it reads LGTAVRKG. Positions 1026–1097 form a coiled coil; it reads QEAKGLTAKL…AHLEEQKGNL (72 aa). AAA stretches follow at residues 1705–1929, 1996–2211, 2299–2544, and 2641–2882; these read YTWE…VLGI, KALA…KAFQ, GMDE…WING, and GYER…SSGS. Residues 1743-1750, 2034-2041, 2334-2341, and 2679-2686 contribute to the ATP site; these read GPAGTGKT, GPSGSGKS, GPEGCGKG, and GNSGVGRR. The interval 2897 to 3185 is stalk; that stretch reads QIYNRKRTQV…ISVDKAESVL (289 aa). Coiled coils occupy residues 2930–2998 and 3120–3199; these read LSAE…SEVQ and ERVS…RGEK. AAA regions lie at residues 3260–3492 and 3701–3917; these read LSSE…TVEK and MSSF…VITL.

The protein belongs to the dynein heavy chain family. The cytoplasmic dynein complex 2 is probably composed by a DHC1B homodimer and a number of D1BLIC light intermediate chains. Interacts with FAP133, FLA10 and LC8.

It localises to the cytoplasm. The protein resides in the cytoskeleton. The protein localises to the flagellum basal body. It is found in the cell projection. Its subcellular location is the cilium. It localises to the flagellum membrane. In terms of biological role, may function as a motor for intraflagellar retrograde transport. Functions in flagellar biogenesis. This is Cytoplasmic dynein 2 heavy chain 1 (DHC1B) from Chlamydomonas reinhardtii (Chlamydomonas smithii).